Reading from the N-terminus, the 162-residue chain is 2-C-methyl-D-erythritol 2,4-cyclodiphosphate synthase (162 aa).

The a divalent metal cation site is built by D12 and H14. 4-CDP-2-C-methyl-D-erythritol 2-phosphate contacts are provided by residues D12–H14 and H38–S39. H46 contacts a divalent metal cation. 4-CDP-2-C-methyl-D-erythritol 2-phosphate contacts are provided by residues D60–G62, F65–D69, and R146.

It belongs to the IspF family. In terms of assembly, homotrimer. A divalent metal cation serves as cofactor.

The enzyme catalyses 4-CDP-2-C-methyl-D-erythritol 2-phosphate = 2-C-methyl-D-erythritol 2,4-cyclic diphosphate + CMP. Its pathway is isoprenoid biosynthesis; isopentenyl diphosphate biosynthesis via DXP pathway; isopentenyl diphosphate from 1-deoxy-D-xylulose 5-phosphate: step 4/6. Involved in the biosynthesis of isopentenyl diphosphate (IPP) and dimethylallyl diphosphate (DMAPP), two major building blocks of isoprenoid compounds. Catalyzes the conversion of 4-diphosphocytidyl-2-C-methyl-D-erythritol 2-phosphate (CDP-ME2P) to 2-C-methyl-D-erythritol 2,4-cyclodiphosphate (ME-CPP) with a corresponding release of cytidine 5-monophosphate (CMP). In Bordetella bronchiseptica (strain ATCC BAA-588 / NCTC 13252 / RB50) (Alcaligenes bronchisepticus), this protein is 2-C-methyl-D-erythritol 2,4-cyclodiphosphate synthase.